Consider the following 443-residue polypeptide: Oxygen-dependent coproporphyrinogen-III oxidase, mitochondrial (443 aa).

The N-terminal 98 residues, 1 to 98, are a transit peptide targeting the mitochondrion; sequence MALRLGQLGS…EMVPKSSGAR (98 aa). The tract at residues 90–111 is disordered; it reads MVPKSSGARSPSPGRLEEDGDE. Ser-101 bears the Phosphoserine mark. An important for dimerization region spans residues 182–191; the sequence is VLQDGRVFEK. Ser-233 is a binding site for coproporphyrinogen III. The active-site Proton donor is His-247. Residue 249–251 participates in coproporphyrinogen III binding; it reads NYR. Residues 381–417 are important for dimerization; the sequence is YVEFNLVYDRGTKFGLFTPGSRIESILMSLPLTARWE. N6-acetyllysine; alternate is present on Lys-393. Lys-393 is modified (N6-succinyllysine; alternate). 400-402 is a binding site for coproporphyrinogen III; it reads GSR.

The protein belongs to the aerobic coproporphyrinogen-III oxidase family. Homodimer.

It is found in the mitochondrion intermembrane space. The enzyme catalyses coproporphyrinogen III + O2 + 2 H(+) = protoporphyrinogen IX + 2 CO2 + 2 H2O. Its pathway is porphyrin-containing compound metabolism; protoporphyrin-IX biosynthesis; protoporphyrinogen-IX from coproporphyrinogen-III (O2 route): step 1/1. Functionally, involved in the heme biosynthesis. Catalyzes the aerobic oxidative decarboxylation of propionate groups of rings A and B of coproporphyrinogen-III to yield the vinyl groups in protoporphyrinogen-IX. The chain is Oxygen-dependent coproporphyrinogen-III oxidase, mitochondrial from Rattus norvegicus (Rat).